The following is a 62-amino-acid chain: Sperm protamine P1 (62 aa).

The segment at Met-1 to Tyr-62 is disordered.

It belongs to the protamine P1 family. In terms of tissue distribution, testis.

It is found in the nucleus. Its subcellular location is the chromosome. Protamines substitute for histones in the chromatin of sperm during the haploid phase of spermatogenesis. They compact sperm DNA into a highly condensed, stable and inactive complex. The polypeptide is Sperm protamine P1 (PRM1) (Neophascogale lorentzii (Long-clawed marsupial mouse)).